The sequence spans 141 residues: Hemoglobin subunit alpha-D (141 aa).

One can recognise a Globin domain in the interval 1–141 (MLTADDKKLL…VAAVLAEKYR (141 aa)). 2 residues coordinate heme b: His-58 and His-87.

Belongs to the globin family. In terms of assembly, heterotetramer of two alpha-D chains and two beta chains. As to expression, red blood cells.

Its function is as follows. Involved in oxygen transport from the lung to the various peripheral tissues. The sequence is that of Hemoglobin subunit alpha-D (HBAD) from Anser anser anser (Western greylag goose).